A 503-amino-acid chain; its full sequence is Variant surface glycoprotein ILTAT 1.3 (503 aa).

The signal sequence occupies residues 1-29; sequence MTKAYENRMLLQALVLAAVLCTTHAEGTA. Disulfide bonds link cysteine 42–cysteine 168 and cysteine 150–cysteine 206. Asparagine 419 and asparagine 432 each carry an N-linked (GlcNAc...) asparagine glycan. Aspartate 480 is lipidated: GPI-anchor amidated aspartate. Positions 481 to 503 are cleaved as a propeptide — removed in mature form; that stretch reads SSFILNKQFALSVVSAAFAALLF.

Its subcellular location is the cell membrane. Functionally, VSG forms a coat on the surface of the parasite. The trypanosome evades the immune response of the host by expressing a series of antigenically distinct VSGs from an estimated 1000 VSG genes. This Trypanosoma brucei brucei protein is Variant surface glycoprotein ILTAT 1.3.